Consider the following 248-residue polypeptide: MAGHSKWAQIKRQKQAADFRKGQIFSKLAREIHVAVREGGPNPETNVRLRMAIERARREGMPKDTIENAIAKASGAAGGAAEYETIVYEGYGPGGVAIMAIALTDNRNRTASVVRHIFSKYGGSLGETGSVAWQFETVGQIVVATDGHDPEEIALAAIDAGARDFEVEDDSVIITTDPDQLSDVAEKLEAAGYQIRQADIQRIPTTTVELEGGQAQSALKLLEALEDLDDVQEVYTNASFPAEVRSAV.

This sequence belongs to the TACO1 family.

It localises to the cytoplasm. This Thermomicrobium roseum (strain ATCC 27502 / DSM 5159 / P-2) protein is Probable transcriptional regulatory protein trd_1132.